A 123-amino-acid polypeptide reads, in one-letter code: Small ribosomal subunit protein uS12 (123 aa).

3-methylthioaspartic acid is present on aspartate 89. The interval 101–123 (SLDTSGVKDRKQGRSKYGAKRPK) is disordered. The segment covering 113–123 (GRSKYGAKRPK) has biased composition (basic residues).

It belongs to the universal ribosomal protein uS12 family. In terms of assembly, part of the 30S ribosomal subunit. Contacts proteins S8 and S17. May interact with IF1 in the 30S initiation complex.

Its function is as follows. With S4 and S5 plays an important role in translational accuracy. Functionally, interacts with and stabilizes bases of the 16S rRNA that are involved in tRNA selection in the A site and with the mRNA backbone. Located at the interface of the 30S and 50S subunits, it traverses the body of the 30S subunit contacting proteins on the other side and probably holding the rRNA structure together. The combined cluster of proteins S8, S12 and S17 appears to hold together the shoulder and platform of the 30S subunit. The chain is Small ribosomal subunit protein uS12 from Stutzerimonas stutzeri (strain A1501) (Pseudomonas stutzeri).